A 254-amino-acid chain; its full sequence is MYFAVISIFPEMFATIREFGITGRAVTQKQVTIECINPRDFTSDNYRRIDERPYGGGPGMVMMAEPLSQAIEDARLRASQHGCRVDKAHCPVIYMSPQGQTLSESSVVDMTEYDGMIILCGRYEGIDERLLSQYVDMEISLGDYVLTGGELPAMVLMDSVIRRLPDIMGDDKSAEQDSFVDGLLDCPHYTKPHEFAGMAVPEVLLSGHHANIAKWRFSQQVERTQARRPDLWQAFTPTVEQAKWLKALAKADKK.

S-adenosyl-L-methionine contacts are provided by residues G121 and 141 to 146 (LGDYVL).

Belongs to the RNA methyltransferase TrmD family. Homodimer.

It localises to the cytoplasm. It catalyses the reaction guanosine(37) in tRNA + S-adenosyl-L-methionine = N(1)-methylguanosine(37) in tRNA + S-adenosyl-L-homocysteine + H(+). Functionally, specifically methylates guanosine-37 in various tRNAs. The protein is tRNA (guanine-N(1)-)-methyltransferase of Psychrobacter cryohalolentis (strain ATCC BAA-1226 / DSM 17306 / VKM B-2378 / K5).